The chain runs to 399 residues: Arginase (399 aa).

Residues His-193, Asp-216, His-218, and Asp-220 each coordinate Mn(2+). Residues 218-222 (HADIN), 229-231 (SGN), and Asp-273 each bind substrate. Asp-322 and Asp-324 together coordinate Mn(2+). Substrate is bound by residues Thr-336 and Glu-367.

The protein belongs to the arginase family. Mn(2+) serves as cofactor.

The protein resides in the cytoplasm. The catalysed reaction is L-arginine + H2O = urea + L-ornithine. The protein operates within nitrogen metabolism; urea cycle; L-ornithine and urea from L-arginine: step 1/1. The polypeptide is Arginase (CAR1) (Eremothecium gossypii (strain ATCC 10895 / CBS 109.51 / FGSC 9923 / NRRL Y-1056) (Yeast)).